Here is a 257-residue protein sequence, read N- to C-terminus: Small ribosomal subunit protein eS1 (257 aa).

The disordered stretch occupies residues 236–257 (TSAEGEKIERPDDYEPPVQESV). The segment covering 239–248 (EGEKIERPDD) has biased composition (basic and acidic residues).

It belongs to the eukaryotic ribosomal protein eS1 family. In terms of assembly, component of the small ribosomal subunit. Mature ribosomes consist of a small (40S) and a large (60S) subunit. The 40S subunit contains about 33 different proteins and 1 molecule of RNA (18S). The 60S subunit contains about 49 different proteins and 3 molecules of RNA (28S, 5.8S and 5S).

It localises to the cytoplasm. This is Small ribosomal subunit protein eS1 from Brugia malayi (Filarial nematode worm).